We begin with the raw amino-acid sequence, 103 residues long: uncharacterized protein (103 aa).

The segment at M1–R103 is disordered. Low complexity predominate over residues G35–W44. Composition is skewed to basic residues over residues R55–S65 and R74–R84.

Belongs to the epstein-barr virus RPMS1 family.

This is an uncharacterized protein from Homo sapiens (Human).